The primary structure comprises 205 residues: High frequency lysogenization protein HflD homolog (205 aa).

It belongs to the HflD family.

It localises to the cytoplasm. The protein resides in the cell inner membrane. The protein is High frequency lysogenization protein HflD homolog of Shewanella baltica (strain OS223).